The sequence spans 189 residues: Interferon alpha-F (189 aa).

The N-terminal stretch at 1-23 (MAPAWSLLLALLLLSCNAICSLG) is a signal peptide. 2 disulfide bridges follow: Cys24–Cys122 and Cys52–Cys162.

The protein belongs to the alpha/beta interferon family.

The protein resides in the secreted. In terms of biological role, produced by macrophages, IFN-alpha have antiviral activities. Interferon stimulates the production of two enzymes: a protein kinase and an oligoadenylate synthetase. The sequence is that of Interferon alpha-F (IFNAF) from Bos taurus (Bovine).